The primary structure comprises 155 residues: Myosin light chain alkali (155 aa).

2 EF-hand domains span residues arginine 7–asparagine 41 and glycine 80–serine 115.

In terms of assembly, myosin is a hexamer of 2 heavy chains and 4 light chains.

This is Myosin light chain alkali (Mlc1) from Drosophila pseudoobscura pseudoobscura (Fruit fly).